Consider the following 231-residue polypeptide: uncharacterized protein (231 aa).

Residues 1-25 (MAKWVPALLLRRVPLFSLRFRPASS) form the signal peptide. The Extracellular segment spans residues 26–200 (TFLPVLAATE…SRPSPSATLT (175 aa)). The tract at residues 39–64 (SVPSGDLSMPVKTRAEGEDDGFGEAG) is disordered. The helical transmembrane segment at 201–225 (LLLASSCLLAPAPPSFILLLFTLIA) threads the bilayer. Residues 226–231 (PDLPHS) are Cytoplasmic-facing.

The protein resides in the membrane. This is an uncharacterized protein from Homo sapiens (Human).